Consider the following 389-residue polypeptide: Phospholipid phosphatase-related protein type 2 (389 aa).

A run of 2 helical transmembrane segments spans residues 14–34 and 66–86; these read IIPC…AFFP and FLGV…AGQV. Asparagine 102 carries an N-linked (GlcNAc...) asparagine glycan. 3 helical membrane passes run 147 to 167, 176 to 196, and 203 to 223; these read AALC…VFRV, SLCL…VAEY, and VLAG…CVVH. Phosphoserine occurs at positions 236 and 249. 2 disordered regions span residues 255-280 and 295-351; these read SVAQ…PQNC and APAM…GRKL. Positions 265-278 are enriched in polar residues; sequence SHSTPARLTPSKPQ. Positions 314 to 339 are enriched in pro residues; sequence TPLPLPLPLPAPAPSQGPSPSSPGPG.

The protein belongs to the PA-phosphatase related phosphoesterase family.

The protein localises to the membrane. In Bos taurus (Bovine), this protein is Phospholipid phosphatase-related protein type 2.